The following is a 429-amino-acid chain: Histidinol dehydrogenase (429 aa).

NAD(+) is bound by residues Y130, Q191, and N214. Substrate-binding residues include S237, Q259, and H262. Zn(2+) is bound by residues Q259 and H262. Catalysis depends on proton acceptor residues E327 and H328. Residues H328, D361, E415, and H420 each coordinate substrate. Residue D361 participates in Zn(2+) binding. H420 provides a ligand contact to Zn(2+).

This sequence belongs to the histidinol dehydrogenase family. Zn(2+) serves as cofactor.

The enzyme catalyses L-histidinol + 2 NAD(+) + H2O = L-histidine + 2 NADH + 3 H(+). It functions in the pathway amino-acid biosynthesis; L-histidine biosynthesis; L-histidine from 5-phospho-alpha-D-ribose 1-diphosphate: step 9/9. Its function is as follows. Catalyzes the sequential NAD-dependent oxidations of L-histidinol to L-histidinaldehyde and then to L-histidine. The polypeptide is Histidinol dehydrogenase (Geobacter sulfurreducens (strain ATCC 51573 / DSM 12127 / PCA)).